We begin with the raw amino-acid sequence, 266 residues long: Phosphatidylglycerol--prolipoprotein diacylglyceryl transferase (266 aa).

7 helical membrane-spanning segments follow: residues 10–30 (VALA…LIGI), 56–76 (LVFW…VLFY), 92–112 (WKGG…VWWF), 120–140 (FFQL…AGRI), 171–191 (PSQL…LWLF), 199–219 (ASVS…VEFV), and 233–253 (WLTM…ALMV). Residue Arg139 participates in a 1,2-diacyl-sn-glycero-3-phospho-(1'-sn-glycerol) binding.

The protein belongs to the Lgt family.

It localises to the cell inner membrane. It carries out the reaction L-cysteinyl-[prolipoprotein] + a 1,2-diacyl-sn-glycero-3-phospho-(1'-sn-glycerol) = an S-1,2-diacyl-sn-glyceryl-L-cysteinyl-[prolipoprotein] + sn-glycerol 1-phosphate + H(+). The protein operates within protein modification; lipoprotein biosynthesis (diacylglyceryl transfer). Its function is as follows. Catalyzes the transfer of the diacylglyceryl group from phosphatidylglycerol to the sulfhydryl group of the N-terminal cysteine of a prolipoprotein, the first step in the formation of mature lipoproteins. The sequence is that of Phosphatidylglycerol--prolipoprotein diacylglyceryl transferase from Pseudomonas aeruginosa (strain LESB58).